Here is a 503-residue protein sequence, read N- to C-terminus: MRKLNPALEFRDFIQVLKDEDDLIEITEEIDPNLEVGAIMRKAYESHLPAPLFKNLKGASKDLFSILGCPAGLRSKEKGDHGRIAHHLGLDPKTTIKEIIDYLLECKEKEPLPPITVPVSSAPCKTHILSEEKIHLQSLPTPYLHVSDGGKYLQTYGMWILQTPDKKWTNWSIARGMVVDDKHITGLVIKPQHIRQIADSWAAIGKANEIPFALCFGVPPAAILVSSMPIPEGVSESDYVGAILGESVPVVKCETNDLMVPATSEMVFEGTLSLTDTHLEGPFGEMHGYVFKSQGHPCPLYTVKAMSYRDNAILPVSNPGLCTDETHTLIGSLVATEAKELAIESGLPILDAFMPYEAQALWLILKVDLKGLQALKTTPEEFCKKVGDIYFRTKVGFIVHEIILVADDIDIFNFKEVIWAYVTRHTPVADQMAFDDVTSFPLAPFVSQSSRSKTMKGGKCVTNCIFRQQYERSFDYITCNFEKGYPKGLVDKVNENWKRYGYK.

Residues N170, H193, and E236 each contribute to the Mn(2+) site. Prenylated FMN is bound by residues N170–R175, Q192–H193, and E236. Residue E285 is the Proton donor of the active site. A prenylated FMN-binding site is contributed by K394.

It belongs to the UbiD family. UbiD-like/FDC subfamily. In terms of assembly, homodimer. May form higher order oligomers. Mn(2+) is required as a cofactor. Prenylated FMN serves as cofactor.

The protein resides in the cytoplasm. It carries out the reaction (E)-4-coumarate + H(+) = 4-vinylphenol + CO2. The enzyme catalyses (E)-cinnamate + H(+) = styrene + CO2. The catalysed reaction is (E)-ferulate + H(+) = 2-methoxy-4-vinylphenol + CO2. Catalyzes the reversible decarboxylation of aromatic carboxylic acids like ferulic acid, p-coumaric acid or cinnamic acid, producing the corresponding vinyl derivatives 4-vinylphenol, 4-vinylguaiacol, and styrene, respectively, which play the role of aroma metabolites. Not essential for ubiquinone synthesis. This chain is Ferulic acid decarboxylase 1, found in Saccharomyces cerevisiae (strain ATCC 204508 / S288c) (Baker's yeast).